The primary structure comprises 415 residues: Tyrosine-protein phosphatase non-receptor type 2 (415 aa).

Positions 5 to 275 constitute a Tyrosine-protein phosphatase domain; it reads IEREFEELDT…RFSYMAIIEG (271 aa). Y22 is modified (phosphotyrosine). At S52 the chain carries Phosphoserine. Position 68 is a phosphotyrosine (Y68). Substrate is bound by residues D182, 216–222, and Q260; that span reads CSAGIGR. Residue C216 is the Phosphocysteine intermediate of the active site. The residue at position 216 (C216) is an S-nitrosocysteine. 3 positions are modified to phosphoserine: S293, S298, and S304. The endoplasmic reticulum location stretch occupies residues 346–415; it reads ESALRKRIRE…WTLFFQQNAL (70 aa). Residues 376-415 are mediates interaction with STX17; that stretch reads ERKRKRWLYWQPILTKMGFMSVILVGAFVGWTLFFQQNAL.

It belongs to the protein-tyrosine phosphatase family. Non-receptor class 1 subfamily. Interacts with RMDN3. Isoform 1 interacts with TMED9. Isoform 1 interacts with STX17; dephosphorylates STX17. Interacts with ITGA1 (via cytoplasmic domain); activates the phosphatase activity towards EGFR. Interacts with TRAF2; probably involved in tumor necrosis factor-mediated signaling. Interacts with MET. Interacts with FAM220A and STAT3; interaction with FAM220A promotes interaction of PTPN2 with transcriptional activator STAT3, leading to dephosphorylation of STAT3 by PTPN2 and negative regulation of STAT3 transcriptional activator activity. Specifically phosphorylated in a cell cycle-dependent manner by cyclin-dependent kinases CDK1 and CDK2. Probably activated through phosphorylation by PKR. In terms of tissue distribution, ubiquitously expressed. Isoform 2 is probably the major isoform. Isoform 1 is expressed in T-cells and in placenta.

Its subcellular location is the endoplasmic reticulum. It localises to the endoplasmic reticulum-Golgi intermediate compartment. The protein localises to the nucleus. It is found in the cytoplasm. The protein resides in the cell membrane. It carries out the reaction O-phospho-L-tyrosyl-[protein] + H2O = L-tyrosyl-[protein] + phosphate. In terms of biological role, non-receptor type tyrosine-specific phosphatase that dephosphorylates receptor protein tyrosine kinases including INSR, EGFR, CSF1R, PDGFR. Also dephosphorylates non-receptor protein tyrosine kinases like JAK1, JAK2, JAK3, Src family kinases, STAT1, STAT3 and STAT6 either in the nucleus or the cytoplasm. Negatively regulates numerous signaling pathways and biological processes like hematopoiesis, inflammatory response, cell proliferation and differentiation, and glucose homeostasis. Plays a multifaceted and important role in the development of the immune system. Functions in T-cell receptor signaling through dephosphorylation of FYN and LCK to control T-cells differentiation and activation. Dephosphorylates CSF1R, negatively regulating its downstream signaling and macrophage differentiation. Negatively regulates cytokine (IL2/interleukin-2 and interferon)-mediated signaling through dephosphorylation of the cytoplasmic kinases JAK1, JAK3 and their substrate STAT1, that propagate signaling downstream of the cytokine receptors. Also regulates the IL6/interleukin-6 and IL4/interleukin-4 cytokine signaling through dephosphorylation of STAT3 and STAT6 respectively. In addition to the immune system, it is involved in anchorage-dependent, negative regulation of EGF-stimulated cell growth. Activated by the integrin ITGA1/ITGB1, it dephosphorylates EGFR and negatively regulates EGF signaling. Dephosphorylates PDGFRB and negatively regulates platelet-derived growth factor receptor-beta signaling pathway and therefore cell proliferation. Negatively regulates tumor necrosis factor-mediated signaling downstream via MAPK through SRC dephosphorylation. May also regulate the hepatocyte growth factor receptor signaling pathway through dephosphorylation of the hepatocyte growth factor receptor MET. Also plays an important role in glucose homeostasis. For instance, negatively regulates the insulin receptor signaling pathway through the dephosphorylation of INSR and control gluconeogenesis and liver glucose production through negative regulation of the IL6 signaling pathways. May also bind DNA. In Homo sapiens (Human), this protein is Tyrosine-protein phosphatase non-receptor type 2 (PTPN2).